The primary structure comprises 195 residues: dCTP deaminase (195 aa).

Residues 105 to 110 (RSSLGR), Asp-123, 131 to 133 (TLE), Gln-152, Tyr-166, Lys-173, and Gln-177 each bind dCTP. Residue Glu-133 is the Proton donor/acceptor of the active site. The segment at 159-195 (KTPADRPYGAERGSKYQGQSGPQASKIQGDREFGGDQ) is disordered. Positions 160–172 (TPADRPYGAERGS) are enriched in basic and acidic residues. Positions 174 to 184 (YQGQSGPQASK) are enriched in polar residues. Positions 186 to 195 (QGDREFGGDQ) are enriched in basic and acidic residues.

It belongs to the dCTP deaminase family. Homotrimer.

It catalyses the reaction dCTP + H2O + H(+) = dUTP + NH4(+). It functions in the pathway pyrimidine metabolism; dUMP biosynthesis; dUMP from dCTP (dUTP route): step 1/2. In terms of biological role, catalyzes the deamination of dCTP to dUTP. This chain is dCTP deaminase, found in Haloarcula marismortui (strain ATCC 43049 / DSM 3752 / JCM 8966 / VKM B-1809) (Halobacterium marismortui).